We begin with the raw amino-acid sequence, 193 residues long: NADH-quinone oxidoreductase subunit B (193 aa).

The tract at residues 1–25 (MGLNDSSGTLVAPKPKGIIDPNTGR) is disordered. 4 residues coordinate [4Fe-4S] cluster: Cys72, Cys73, Cys137, and Cys167.

Belongs to the complex I 20 kDa subunit family. In terms of assembly, NDH-1 is composed of 14 different subunits. Subunits NuoB, C, D, E, F, and G constitute the peripheral sector of the complex. [4Fe-4S] cluster is required as a cofactor.

It localises to the cell inner membrane. The enzyme catalyses a quinone + NADH + 5 H(+)(in) = a quinol + NAD(+) + 4 H(+)(out). NDH-1 shuttles electrons from NADH, via FMN and iron-sulfur (Fe-S) centers, to quinones in the respiratory chain. Couples the redox reaction to proton translocation (for every two electrons transferred, four hydrogen ions are translocated across the cytoplasmic membrane), and thus conserves the redox energy in a proton gradient. In Mesorhizobium japonicum (strain LMG 29417 / CECT 9101 / MAFF 303099) (Mesorhizobium loti (strain MAFF 303099)), this protein is NADH-quinone oxidoreductase subunit B.